The chain runs to 212 residues: MPIREIRHPLIRHKLGLMRRADISTKNFRELAQEVGALLTYEATADLTLENYDIQGWAGTVSVEKIAGKKITVVPILRAGIGMLDGVLSLIPGAKVSAVGVARNEETLQAHTYLEKLVPEIDERLAMIIDPMLATGSSMVATIDLLKKAGCKEIRAMVLVAAPEGIAAVEKAHPDVMIYTASIDERLNEHGYIIPGLGDAGDKIFGTKQKDA.

Residues R78, R103, and 130–138 each bind 5-phospho-alpha-D-ribose 1-diphosphate; that span reads DPMLATGSS. Uracil is bound by residues I193 and 198 to 200; that span reads GDA. D199 is a 5-phospho-alpha-D-ribose 1-diphosphate binding site.

It belongs to the UPRTase family. Requires Mg(2+) as cofactor.

The catalysed reaction is UMP + diphosphate = 5-phospho-alpha-D-ribose 1-diphosphate + uracil. It functions in the pathway pyrimidine metabolism; UMP biosynthesis via salvage pathway; UMP from uracil: step 1/1. Allosterically activated by GTP. In terms of biological role, catalyzes the conversion of uracil and 5-phospho-alpha-D-ribose 1-diphosphate (PRPP) to UMP and diphosphate. The chain is Uracil phosphoribosyltransferase from Pseudomonas savastanoi pv. phaseolicola (strain 1448A / Race 6) (Pseudomonas syringae pv. phaseolicola (strain 1448A / Race 6)).